Here is a 148-residue protein sequence, read N- to C-terminus: Putative lysozyme C-2 (148 aa).

The N-terminal stretch at 1–18 is a signal peptide; sequence MKALLVLGFLLLSASVQA. The C-type lysozyme domain occupies 19–148; the sequence is KVFKHCELAR…LSGYIRNCGV (130 aa). 4 disulfides stabilise this stretch: Cys24–Cys146, Cys48–Cys134, Cys83–Cys99, and Cys95–Cys113. Active-site residues include Glu53 and Asp71.

This sequence belongs to the glycosyl hydrolase 22 family. As to quaternary structure, monomer.

The protein resides in the secreted. It carries out the reaction Hydrolysis of (1-&gt;4)-beta-linkages between N-acetylmuramic acid and N-acetyl-D-glucosamine residues in a peptidoglycan and between N-acetyl-D-glucosamine residues in chitodextrins.. In terms of biological role, lysozymes have primarily a bacteriolytic function; those in tissues and body fluids are associated with the monocyte-macrophage system and enhance the activity of immunoagents. In the intestine they may also have a digestive function. This Rattus norvegicus (Rat) protein is Putative lysozyme C-2 (Lyz2).